The chain runs to 455 residues: Ribulose bisphosphate carboxylase large chain (455 aa).

At K5 the chain carries N6,N6,N6-trimethyllysine. Positions 114 and 164 each coordinate substrate. The active-site Proton acceptor is the K166. A substrate-binding site is contributed by K168. K192, D194, and E195 together coordinate Mg(2+). K192 carries the N6-carboxylysine modification. Catalysis depends on H285, which acts as the Proton acceptor. Substrate-binding residues include R286, H318, and S370.

The protein belongs to the RuBisCO large chain family. Type I subfamily. Heterohexadecamer of 8 large chains and 8 small chains; disulfide-linked. The disulfide link is formed within the large subunit homodimers. The cofactor is Mg(2+). Post-translationally, the disulfide bond which can form in the large chain dimeric partners within the hexadecamer appears to be associated with oxidative stress and protein turnover.

The protein resides in the plastid. It localises to the chloroplast. The enzyme catalyses 2 (2R)-3-phosphoglycerate + 2 H(+) = D-ribulose 1,5-bisphosphate + CO2 + H2O. The catalysed reaction is D-ribulose 1,5-bisphosphate + O2 = 2-phosphoglycolate + (2R)-3-phosphoglycerate + 2 H(+). RuBisCO catalyzes two reactions: the carboxylation of D-ribulose 1,5-bisphosphate, the primary event in carbon dioxide fixation, as well as the oxidative fragmentation of the pentose substrate in the photorespiration process. Both reactions occur simultaneously and in competition at the same active site. This is Ribulose bisphosphate carboxylase large chain from Lupinus luteus (European yellow lupine).